A 110-amino-acid polypeptide reads, in one-letter code: Phosphoribosyl-AMP cyclohydrolase (110 aa).

Asp74 is a binding site for Mg(2+). Cys75 is a binding site for Zn(2+). Asp76 and Asp78 together coordinate Mg(2+). Zn(2+)-binding residues include Cys91 and Cys98.

The protein belongs to the PRA-CH family. Homodimer. It depends on Mg(2+) as a cofactor. Zn(2+) serves as cofactor.

The protein localises to the cytoplasm. It catalyses the reaction 1-(5-phospho-beta-D-ribosyl)-5'-AMP + H2O = 1-(5-phospho-beta-D-ribosyl)-5-[(5-phospho-beta-D-ribosylamino)methylideneamino]imidazole-4-carboxamide. The protein operates within amino-acid biosynthesis; L-histidine biosynthesis; L-histidine from 5-phospho-alpha-D-ribose 1-diphosphate: step 3/9. Its function is as follows. Catalyzes the hydrolysis of the adenine ring of phosphoribosyl-AMP. This Lacticaseibacillus casei (strain BL23) (Lactobacillus casei) protein is Phosphoribosyl-AMP cyclohydrolase.